The chain runs to 208 residues: Thymidylate kinase (208 aa).

10–17 lines the ATP pocket; that stretch reads GPEGSGKT.

Belongs to the thymidylate kinase family.

It catalyses the reaction dTMP + ATP = dTDP + ADP. Its function is as follows. Phosphorylation of dTMP to form dTDP in both de novo and salvage pathways of dTTP synthesis. The protein is Thymidylate kinase of Bacillus anthracis.